The following is a 1972-amino-acid chain: TP53-binding protein 1 (1972 aa).

Disordered regions lie at residues 24 to 273 (DSQP…VAAM), 290 to 332 (QIQK…CSLA), and 346 to 507 (GQRS…LGLS). Residues Ser-25 and Ser-63 each carry the phosphoserine modification. Residues 82 to 91 (EHLKENKVAD) are compositionally biased toward basic and acidic residues. The span at 94–121 (DSSNLDTCGSISQVIEQLPQPNRTSSVL) shows a compositional bias: polar residues. 2 positions are modified to phosphoserine: Ser-105 and Ser-124. The segment covering 138–149 (ELEQKEKEKEED) has biased composition (basic and acidic residues). Positions 151 to 168 (SGNTTHSLGAEDTASSQL) are enriched in polar residues. A phosphoserine mark is found at Ser-166, Ser-176, and Ser-178. Polar residues predominate over residues 195–205 (LQSVTTNSGYT). Lys-217 participates in a covalent cross-link: Glycyl lysine isopeptide (Lys-Gly) (interchain with G-Cter in SUMO1); alternate. Lys-217 participates in a covalent cross-link: Glycyl lysine isopeptide (Lys-Gly) (interchain with G-Cter in SUMO2); alternate. Ser-222, Ser-265, and Ser-294 each carry phosphoserine. Polar residues-rich tracts occupy residues 300–322 (LSTQEDLFDQSNKTVSSDGCSTP) and 346–361 (GQRSLVQDSLSTNSSD). Thr-302 carries the post-translational modification Phosphothreonine. 7 positions are modified to phosphoserine: Ser-366, Ser-380, Ser-395, Ser-398, Ser-429, Ser-452, and Ser-464. Residues 426–441 (STVSPQASTPISQSTP) show a composition bias toward polar residues. The segment covering 442 to 452 (VFPPGSLPIPS) has biased composition (pro residues). Positions 481-490 (HSSSLTVECS) are enriched in polar residues. Basic and acidic residues predominate over residues 491-501 (KTSEIEPKNSP). A phosphoserine mark is found at Ser-500, Ser-507, Ser-518, Ser-523, and Ser-525. Over residues 520–531 (SEYSQSPKMESL) the composition is skewed to polar residues. Residues 520-556 (SEYSQSPKMESLSSHRIDEDGENTQIEDTEPMSPVLN) are disordered. The span at 538–549 (EDGENTQIEDTE) shows a compositional bias: acidic residues. Thr-543 and Thr-548 each carry phosphothreonine. Phosphoserine is present on residues Ser-552, Ser-566, and Ser-580. The tract at residues 568–595 (LMNPAQDGEVQLSQNDDKTKGDDTDTRD) is disordered. Residues 582 to 595 (NDDKTKGDDTDTRD) show a composition bias toward basic and acidic residues. Residues Ser-630, Ser-635, Ser-639, and Ser-640 each carry the phosphoserine modification. The interval 649 to 687 (EIKEHHPEEGSSGSEVEEIPETPCESQGEELKEENMESV) is disordered. Thr-670 carries the post-translational modification Phosphothreonine. A phosphoserine mark is found at Ser-692, Ser-724, Ser-727, Ser-771, Ser-809, Ser-830, Ser-831, and Ser-834. A disordered region spans residues 742–911 (EQEAWEEATS…TPFHFTLPKE (170 aa)). The span at 798 to 816 (AENRLDTKEEKSVEYEGDL) shows a compositional bias: basic and acidic residues. Residues 839-848 (RADDPLRLDQ) are compositionally biased toward basic and acidic residues. The span at 849-864 (ELQQPQTQEKTSNSLT) shows a compositional bias: polar residues. Phosphothreonine is present on Thr-855. A Glycyl lysine isopeptide (Lys-Gly) (interchain with G-Cter in SUMO1); alternate cross-link involves residue Lys-868. Lys-868 participates in a covalent cross-link: Glycyl lysine isopeptide (Lys-Gly) (interchain with G-Cter in SUMO2); alternate. The segment covering 890 to 902 (HASQSFCESSSET) has biased composition (polar residues). A Phosphothreonine modification is found at Thr-922. Lys-930 participates in a covalent cross-link: Glycyl lysine isopeptide (Lys-Gly) (interchain with G-Cter in SUMO2). A phosphoserine mark is found at Ser-970 and Ser-975. Residue Lys-984 forms a Glycyl lysine isopeptide (Lys-Gly) (interchain with G-Cter in SUMO2) linkage. 2 disordered regions span residues 997 to 1028 (EASEESLQFNLEKPATGERKNGSTAVAESVAS) and 1045 to 1103 (ENEA…VSPA). Over residues 1018–1028 (GSTAVAESVAS) the composition is skewed to polar residues. Ser-1028 is subject to Phosphoserine. Phosphothreonine is present on Thr-1056. Residue Ser-1068 is modified to Phosphoserine. Residues 1071 to 1083 (EEEKEKLEGDHTI) show a composition bias toward basic and acidic residues. A phosphoserine mark is found at Ser-1086, Ser-1094, Ser-1101, and Ser-1114. The segment covering 1127–1139 (DQKEGRSTNKENP) has biased composition (basic and acidic residues). Disordered stretches follow at residues 1127-1148 (DQKEGRSTNKENPSKALIERPS), 1188-1232 (NFGK…QPPH), and 1269-1478 (VTEE…DGLD). The residue at position 1148 (Ser-1148) is a Phosphoserine. The span at 1188–1200 (NFGKQDATVQTER) shows a compositional bias: polar residues. Phosphothreonine is present on Thr-1214. Ser-1216 and Ser-1219 each carry phosphoserine. Residues 1272-1285 (ETEEPIVECQECET) are compositionally biased toward acidic residues. 2 stretches are compositionally biased toward low complexity: residues 1298-1307 (DLGDISSFSS) and 1316-1329 (SSGTSLSAMHSSGS). 2 positions are modified to phosphoserine: Ser-1317 and Ser-1342. Position 1355 is an omega-N-methylarginine (Arg-1355). Ser-1362 carries the phosphoserine modification. A Glycyl lysine isopeptide (Lys-Gly) (interchain with G-Cter in SUMO2) cross-link involves residue Lys-1365. A Phosphoserine modification is found at Ser-1368. Thr-1372 bears the Phosphothreonine mark. The short motif at 1396 to 1403 (RGRGRRGR) is the GAR element. Phosphoserine occurs at positions 1426 and 1430. Lys-1434 participates in a covalent cross-link: Glycyl lysine isopeptide (Lys-Gly) (interchain with G-Cter in SUMO1); alternate. A Glycyl lysine isopeptide (Lys-Gly) (interchain with G-Cter in SUMO2); alternate cross-link involves residue Lys-1434. Residues Ser-1460, Ser-1462, and Ser-1474 each carry the phosphoserine modification. Residues 1484–1603 (NSFVGLRVVA…NRLREQYGLG (120 aa)) form a tudor-like region. Residues 1495–1523 (WSSNGYFYSGKITRDVGAGKYKLLFDDGY) form an interaction with dimethylated histone H4 region. Lys-1563 is covalently cross-linked (Glycyl lysine isopeptide (Lys-Gly) (interchain with G-Cter in SUMO1); alternate). Lys-1563 is covalently cross-linked (Glycyl lysine isopeptide (Lys-Gly) (interchain with G-Cter in SUMO2); alternate). The UDR motif lies at 1604-1631 (PYEAVTPLTKAADISLDNLVEGKRKRRS). A Phosphothreonine modification is found at Thr-1609. Ser-1618, Ser-1631, and Ser-1635 each carry phosphoserine. 2 disordered regions span residues 1622–1719 (LVEG…EEQR) and 1745–1768 (LASRSKLPDGPTGSSEEEEEFLEI). A compositionally biased stretch (low complexity) spans 1634–1650 (SSPATPTASSSSSTTPT). 2 positions are modified to phosphothreonine: Thr-1638 and Thr-1648. Ser-1656, Ser-1673, and Ser-1678 each carry phosphoserine. Residue Lys-1685 forms a Glycyl lysine isopeptide (Lys-Gly) (interchain with G-Cter in ubiquitin) linkage. Phosphoserine is present on residues Ser-1701, Ser-1759, and Ser-1778. BRCT domains are found at residues 1724-1848 (LNKT…NYLL) and 1864-1964 (PREN…QHPK).

Homoligomer. Interacts with p53/TP53 (via the central domain). Interacts with DCLRE1C. Interacts with histone H2AX and this requires phosphorylation of H2AX on 'Ser-139'. Interacts with histone H4 that has been dimethylated at 'Lys-20' (H4K20me2). Has low affinity for histone H4 containing monomethylated 'Lys-20' (H4K20me1). Does not bind histone H4 containing unmethylated or trimethylated 'Lys-20' (H4K20me3). Has low affinity for histone H3 that has been dimethylated on 'Lys-79'. Has very low affinity for histone H3 that has been monomethylated on 'Lys-79' (in vitro). Does not bind unmethylated histone H3. Interacts with histone H2A monoubiquitinated at 'Lys-15' (H2AK15Ub). Interacts with PWWP3A/EXPAND1. Interacts with CHEK2; modulates CHEK2 phosphorylation at 'Thr-68' in response to infrared. Interacts with MSL1; this interaction may be required for MSL1 DNA repair activity, but not for histone acetyltransferase activity. Interacts (when phosphorylated by ATM) with RIF1. Interacts (via the Tudor-like domain) with NUDT16L1/TIRR; interaction masks the Tudor-like domain and prevents recruitment to chromatin. Interacts with PAXIP1. Interacts with SHLD2. Interacts (when phosphorylated) with TOPBP1. Interacts with GFI1; promoting methylation by PRMT1. Interacts with (phosphorylated) DYNLL1; specifically binds DYNLL1 phosphorylated at 'Ser-88' and promotes its recruitment to double stand breaks (DSBs). In terms of assembly, (Microbial infection) Interacts (via C-terminus) with Epstein-Barr virus lytic switch protein BZLF1 (via C-terminus); this interaction is involved in the activation of the viral lytic cycle. Asymmetrically dimethylated on Arg residues by PRMT1. Methylation is required for DNA binding. In terms of processing, phosphorylated at basal level in the absence of DNA damage. Phosphorylated by ATM in response to DNA damage: phosphorylation at different sites promotes interaction with different set of proteins: phosphorylation at the N-terminus by ATM (residues from 6-178) promotes interaction with PAXIP1 and non-homologous end joining (NHEJ) of dysfunctional telomeres. Phosphorylation by ATM at residues that are located more C-terminus (residues 300-650) leads to promote interaction with RIF1. Interaction with RIF1 leads to disrupt interaction with NUDT16L1/TIRR. Phosphorylation at Thr-1609 and Ser-1618 in the UDR motif blocks interaction with H2AK15ub. Dephosphorylated by PPP4C. Hyperphosphorylation during mitosis correlates with its exclusion from chromatin and DNA lesions. Hyperphosphorylated in an ATR-dependent manner in response to DNA damage induced by UV irradiation. Dephosphorylated by PPP5C. Phosphorylation at Ser-366 and Thr-670 promotes interaction with TOPBP1. Phosphorylated by VRK1. Post-translationally, monoubiquitinated at Lys-1685 by MSL2 is reponse to DNA damage, leading to its stabilization.

It localises to the nucleus. Its subcellular location is the chromosome. It is found in the centromere. The protein localises to the kinetochore. Its function is as follows. Double-strand break (DSB) repair protein involved in response to DNA damage, telomere dynamics and class-switch recombination (CSR) during antibody genesis. Plays a key role in the repair of double-strand DNA breaks (DSBs) in response to DNA damage by promoting non-homologous end joining (NHEJ)-mediated repair of DSBs and specifically counteracting the function of the homologous recombination (HR) repair protein BRCA1. In response to DSBs, phosphorylation by ATM promotes interaction with RIF1 and dissociation from NUDT16L1/TIRR, leading to recruitment to DSBs sites. Recruited to DSBs sites by recognizing and binding histone H2A monoubiquitinated at 'Lys-15' (H2AK15Ub) and histone H4 dimethylated at 'Lys-20' (H4K20me2), two histone marks that are present at DSBs sites. Required for immunoglobulin class-switch recombination (CSR) during antibody genesis, a process that involves the generation of DNA DSBs. Participates in the repair and the orientation of the broken DNA ends during CSR. In contrast, it is not required for classic NHEJ and V(D)J recombination. Promotes NHEJ of dysfunctional telomeres via interaction with PAXIP1. In Homo sapiens (Human), this protein is TP53-binding protein 1.